The following is a 135-amino-acid chain: Ribonuclease P protein component (135 aa).

Residues 115 to 135 are disordered; sequence TNETVSPVSDTPLPQHERGSQ.

The protein belongs to the RnpA family. As to quaternary structure, consists of a catalytic RNA component (M1 or rnpB) and a protein subunit.

It carries out the reaction Endonucleolytic cleavage of RNA, removing 5'-extranucleotides from tRNA precursor.. RNaseP catalyzes the removal of the 5'-leader sequence from pre-tRNA to produce the mature 5'-terminus. It can also cleave other RNA substrates such as 4.5S RNA. The protein component plays an auxiliary but essential role in vivo by binding to the 5'-leader sequence and broadening the substrate specificity of the ribozyme. This Chloroflexus aurantiacus (strain ATCC 29366 / DSM 635 / J-10-fl) protein is Ribonuclease P protein component.